The primary structure comprises 358 residues: Hydroxyproline O-arabinosyltransferase 3 (358 aa).

The chain crosses the membrane as a helical; Signal-anchor span at residues 8-28 (LLFLLGFGFFVVTYNLLTLIV).

In terms of tissue distribution, ubiquitous.

The protein resides in the golgi apparatus. It localises to the cis-Golgi network membrane. The catalysed reaction is trans-4-hydroxy-L-prolyl-[protein] + UDP-beta-L-arabinofuranose = O-(beta-L-arabinofuranosyl)-trans-4-hydroxy-L-prolyl-[protein] + UDP + H(+). Glycosyltransferase involved in the O-arabinosylation of several proteins including extensins and small signaling peptides. Catalyzes the transfer of the initial L-arabinose to the hydroxyl group of Hyp residues. Contributes redundantly with HPAT1 and HPAT2 to arabinosylation of EXT3, but main contributor to arabinosylation of CLE peptides. The protein is Hydroxyproline O-arabinosyltransferase 3 of Arabidopsis thaliana (Mouse-ear cress).